The chain runs to 93 residues: Small ribosomal subunit protein uS19 (93 aa).

This sequence belongs to the universal ribosomal protein uS19 family.

Functionally, protein S19 forms a complex with S13 that binds strongly to the 16S ribosomal RNA. This Desulfitobacterium hafniense (strain DSM 10664 / DCB-2) protein is Small ribosomal subunit protein uS19.